Reading from the N-terminus, the 252-residue chain is UPF0273 protein MK0039 (252 aa).

The KaiC domain maps to E4–R248. An ATP-binding site is contributed by G31–T38.

Belongs to the UPF0273 family.

In Methanopyrus kandleri (strain AV19 / DSM 6324 / JCM 9639 / NBRC 100938), this protein is UPF0273 protein MK0039.